A 95-amino-acid chain; its full sequence is Aspartyl/glutamyl-tRNA(Asn/Gln) amidotransferase subunit C (95 aa).

Belongs to the GatC family. In terms of assembly, heterotrimer of A, B and C subunits.

It catalyses the reaction L-glutamyl-tRNA(Gln) + L-glutamine + ATP + H2O = L-glutaminyl-tRNA(Gln) + L-glutamate + ADP + phosphate + H(+). The enzyme catalyses L-aspartyl-tRNA(Asn) + L-glutamine + ATP + H2O = L-asparaginyl-tRNA(Asn) + L-glutamate + ADP + phosphate + 2 H(+). In terms of biological role, allows the formation of correctly charged Asn-tRNA(Asn) or Gln-tRNA(Gln) through the transamidation of misacylated Asp-tRNA(Asn) or Glu-tRNA(Gln) in organisms which lack either or both of asparaginyl-tRNA or glutaminyl-tRNA synthetases. The reaction takes place in the presence of glutamine and ATP through an activated phospho-Asp-tRNA(Asn) or phospho-Glu-tRNA(Gln). The polypeptide is Aspartyl/glutamyl-tRNA(Asn/Gln) amidotransferase subunit C (Lysinibacillus sphaericus (strain C3-41)).